The sequence spans 550 residues: Chaperonin GroEL 2 (550 aa).

Residues 30-33 (TLGP), Lys51, 87-91 (DGTTT), Gly415, and Asp496 each bind ATP.

Belongs to the chaperonin (HSP60) family. Forms a cylinder of 14 subunits composed of two heptameric rings stacked back-to-back. Interacts with the co-chaperonin GroES.

It is found in the cytoplasm. It catalyses the reaction ATP + H2O + a folded polypeptide = ADP + phosphate + an unfolded polypeptide.. Its function is as follows. Together with its co-chaperonin GroES, plays an essential role in assisting protein folding. The GroEL-GroES system forms a nano-cage that allows encapsulation of the non-native substrate proteins and provides a physical environment optimized to promote and accelerate protein folding. This chain is Chaperonin GroEL 2, found in Bradyrhizobium diazoefficiens (strain JCM 10833 / BCRC 13528 / IAM 13628 / NBRC 14792 / USDA 110).